A 103-amino-acid chain; its full sequence is Large ribosomal subunit protein uL24 (103 aa).

This sequence belongs to the universal ribosomal protein uL24 family. As to quaternary structure, part of the 50S ribosomal subunit.

Functionally, one of two assembly initiator proteins, it binds directly to the 5'-end of the 23S rRNA, where it nucleates assembly of the 50S subunit. Its function is as follows. One of the proteins that surrounds the polypeptide exit tunnel on the outside of the subunit. This chain is Large ribosomal subunit protein uL24, found in Brucella ovis (strain ATCC 25840 / 63/290 / NCTC 10512).